A 185-amino-acid chain; its full sequence is Capsid protein (185 aa).

Residues 136–185 (NAPILSTLPETTVVRRRDRGRSPRRRTPSPRRRRSQSPRRRRSQSRESQC) are disordered. Positions 149–178 (VRRRDRGRSPRRRTPSPRRRRSQSPRRRRS) are enriched in basic residues. Residues Ser-157, Ser-164, and Ser-172 each carry the phosphoserine; by host modification. The 1; half-length repeat unit spans residues 157-163 (SPRRRTP). Positions 157-179 (SPRRRTPSPRRRRSQSPRRRRSQ) are 3 X 8 AA repeats of S-P-R-R-R-[PR]-S-Q. The Bipartite nuclear localization signal motif lies at 160-177 (RRTPSPRRRRSQSPRRRR). Tandem repeats lie at residues 164 to 171 (SPRRRRSQ) and 172 to 179 (SPRRRRSQ). Positions 179 to 185 (QSRESQC) are RNA binding.

This sequence belongs to the orthohepadnavirus core antigen family. Homodimerizes, then multimerizes. Interacts with cytosol exposed regions of viral L glycoprotein present in the reticulum-to-Golgi compartment. Interacts with human FLNB. Phosphorylated form interacts with host importin alpha; this interaction depends on the exposure of the NLS, which itself depends upon genome maturation and/or phosphorylation of the capsid protein. Interacts with host NUP153. In terms of processing, phosphorylated by host SRPK1, SRPK2, and maybe protein kinase C or GAPDH. Phosphorylation is critical for pregenomic RNA packaging. Protein kinase C phosphorylation is stimulated by HBx protein and may play a role in transport of the viral genome to the nucleus at the late step during the viral replication cycle.

It localises to the virion. Its subcellular location is the host cytoplasm. Its function is as follows. Self assembles to form an icosahedral capsid. Most capsids appear to be large particles with an icosahedral symmetry of T=4 and consist of 240 copies of capsid protein, though a fraction forms smaller T=3 particles consisting of 180 capsid proteins. Entering capsids are transported along microtubules to the nucleus. Phosphorylation of the capsid is thought to induce exposure of nuclear localization signal in the C-terminal portion of the capsid protein that allows binding to the nuclear pore complex via the importin (karyopherin-) alpha and beta. Capsids are imported in intact form through the nuclear pore into the nuclear basket, where it probably binds NUP153. Only capsids that contain the mature viral genome can release the viral DNA and capsid protein into the nucleoplasm. Immature capsids get stuck in the basket. Capsids encapsulate the pre-genomic RNA and the P protein. Pre-genomic RNA is reverse-transcribed into DNA while the capsid is still in the cytoplasm. The capsid can then either be directed to the nucleus, providing more genomes for transcription, or bud through the endoplasmic reticulum to provide new virions. In Homo sapiens (Human), this protein is Capsid protein.